We begin with the raw amino-acid sequence, 361 residues long: Phospho-N-acetylmuramoyl-pentapeptide-transferase (361 aa).

10 consecutive transmembrane segments (helical) span residues Leu28–Leu48, Thr73–Leu93, Tyr97–Tyr117, Phe134–Leu154, Val168–Ser188, Gly200–Ala220, Ala237–Phe257, Val264–Ile284, Ile289–Val309, and Gln338–Leu358.

This sequence belongs to the glycosyltransferase 4 family. MraY subfamily. It depends on Mg(2+) as a cofactor.

The protein resides in the cell inner membrane. It catalyses the reaction UDP-N-acetyl-alpha-D-muramoyl-L-alanyl-gamma-D-glutamyl-meso-2,6-diaminopimeloyl-D-alanyl-D-alanine + di-trans,octa-cis-undecaprenyl phosphate = di-trans,octa-cis-undecaprenyl diphospho-N-acetyl-alpha-D-muramoyl-L-alanyl-D-glutamyl-meso-2,6-diaminopimeloyl-D-alanyl-D-alanine + UMP. The protein operates within cell wall biogenesis; peptidoglycan biosynthesis. Its function is as follows. Catalyzes the initial step of the lipid cycle reactions in the biosynthesis of the cell wall peptidoglycan: transfers peptidoglycan precursor phospho-MurNAc-pentapeptide from UDP-MurNAc-pentapeptide onto the lipid carrier undecaprenyl phosphate, yielding undecaprenyl-pyrophosphoryl-MurNAc-pentapeptide, known as lipid I. This Nitrosomonas eutropha (strain DSM 101675 / C91 / Nm57) protein is Phospho-N-acetylmuramoyl-pentapeptide-transferase.